We begin with the raw amino-acid sequence, 309 residues long: Carboxylesterase Culp6 homolog (309 aa).

The chain crosses the membrane as a helical span at residues I5–V25. The cysteines at positions 55 and 146 are disulfide-linked. Residues S157, D253, and H279 contribute to the active site. A disulfide bridge links C249 with C256.

The protein belongs to the cutinase family.

The protein resides in the cell membrane. It catalyses the reaction a butanoate ester + H2O = an aliphatic alcohol + butanoate + H(+). With respect to regulation, inhibited by tetrahydrolipstatin (THL), a specific lipase inhibitor. In terms of biological role, esterase that may be involved in cell wall biosynthesis and/or maintenance. Hydrolyzes pNP-butyrate (C4). This Corynebacterium glutamicum (strain ATCC 13032 / DSM 20300 / JCM 1318 / BCRC 11384 / CCUG 27702 / LMG 3730 / NBRC 12168 / NCIMB 10025 / NRRL B-2784 / 534) protein is Carboxylesterase Culp6 homolog.